The chain runs to 778 residues: Dynein axonemal intermediate chain 4 (778 aa).

WD repeat units follow at residues 477–517 (HCES…QTPI), 526–573 (LHTS…ECVD), 586–629 (RHIS…QYLE), 633–673 (AHKR…PVMG), 676–715 (SGQR…LDPT), and 721–760 (SPGV…AGGG).

Part of the multisubunit axonemal dynein complex formed at least of two heavy chains and a number of intermediate and light chains.

The protein localises to the cytoplasm. It localises to the cytoskeleton. The protein resides in the flagellum axoneme. Its subcellular location is the cilium axoneme. It is found in the dynein axonemal particle. Its function is as follows. Plays a critical role in the assembly of axonemal dynein complex. Plays a key role in ciliary motility. In Danio rerio (Zebrafish), this protein is Dynein axonemal intermediate chain 4.